Consider the following 270-residue polypeptide: tRNA pseudouridine synthase A (270 aa).

The active-site Nucleophile is D52. Y110 provides a ligand contact to substrate.

This sequence belongs to the tRNA pseudouridine synthase TruA family. As to quaternary structure, homodimer.

It carries out the reaction uridine(38/39/40) in tRNA = pseudouridine(38/39/40) in tRNA. Its function is as follows. Formation of pseudouridine at positions 38, 39 and 40 in the anticodon stem and loop of transfer RNAs. In Paraburkholderia phytofirmans (strain DSM 17436 / LMG 22146 / PsJN) (Burkholderia phytofirmans), this protein is tRNA pseudouridine synthase A.